Here is a 294-residue protein sequence, read N- to C-terminus: Acetylglutamate kinase (294 aa).

Residues 63 to 64 (GG), R85, and N188 contribute to the substrate site.

It belongs to the acetylglutamate kinase family. ArgB subfamily.

The protein resides in the cytoplasm. The catalysed reaction is N-acetyl-L-glutamate + ATP = N-acetyl-L-glutamyl 5-phosphate + ADP. The protein operates within amino-acid biosynthesis; L-arginine biosynthesis; N(2)-acetyl-L-ornithine from L-glutamate: step 2/4. Functionally, catalyzes the ATP-dependent phosphorylation of N-acetyl-L-glutamate. This Methanococcus aeolicus (strain ATCC BAA-1280 / DSM 17508 / OCM 812 / Nankai-3) protein is Acetylglutamate kinase.